We begin with the raw amino-acid sequence, 159 residues long: MPLYEHVFLARQDASTQQVEELTTQITGVIEGLGGKVTKTEAWGLRSLTYRMNKNRKAHFVLLNIDGPSAVVSEIERQERINEDIVRYLTVRVDEHEEGPSAMMRKADRDRERDDRGPREGGFRGDREGRGDREGGGFRGDRGPRRPREDADTAAASEE.

Basic and acidic residues predominate over residues 93-151; the sequence is VDEHEEGPSAMMRKADRDRERDDRGPREGGFRGDREGRGDREGGGFRGDRGPRRPREDA. The interval 93 to 159 is disordered; that stretch reads VDEHEEGPSA…DADTAAASEE (67 aa).

This sequence belongs to the bacterial ribosomal protein bS6 family.

In terms of biological role, binds together with bS18 to 16S ribosomal RNA. The protein is Small ribosomal subunit protein bS6 of Rhodopseudomonas palustris (strain HaA2).